The chain runs to 140 residues: MPTINQLVRKGRQSKVVKSDSPALNKGYNSFIKARTDISSPQKRGVCTRVGTMTPKKPNSALRKYARVRLTNTMEVTAYIPGIGHNLQEHSVVLIRGGRVKDLPGVRYHIVRGALDTAGVDGRMQGRSKYGTKRPKAAKK.

Residues 1-20 form a disordered region; the sequence is MPTINQLVRKGRQSKVVKSD. The residue at position 102 (Asp102) is a 3-methylthioaspartic acid. Residues 121-140 form a disordered region; that stretch reads DGRMQGRSKYGTKRPKAAKK. The segment covering 130 to 140 has biased composition (basic residues); sequence YGTKRPKAAKK.

This sequence belongs to the universal ribosomal protein uS12 family. In terms of assembly, part of the 30S ribosomal subunit. Contacts proteins S8 and S17. May interact with IF1 in the 30S initiation complex.

With S4 and S5 plays an important role in translational accuracy. Functionally, interacts with and stabilizes bases of the 16S rRNA that are involved in tRNA selection in the A site and with the mRNA backbone. Located at the interface of the 30S and 50S subunits, it traverses the body of the 30S subunit contacting proteins on the other side and probably holding the rRNA structure together. The combined cluster of proteins S8, S12 and S17 appears to hold together the shoulder and platform of the 30S subunit. This is Small ribosomal subunit protein uS12 from Exiguobacterium sibiricum (strain DSM 17290 / CCUG 55495 / CIP 109462 / JCM 13490 / 255-15).